Consider the following 120-residue polypeptide: Protein GP96 (120 aa).

It belongs to the herpesviridae UL96 family.

The chain is Protein GP96 from Cavia porcellus (Guinea pig).